The sequence spans 313 residues: 1-phosphofructokinase (313 aa).

ATP contacts are provided by residues 222–227 and 254–255; these read SMGAKG and GD. The Proton acceptor role is filled by Asp255.

This sequence belongs to the carbohydrate kinase PfkB family.

It catalyses the reaction beta-D-fructose 1-phosphate + ATP = beta-D-fructose 1,6-bisphosphate + ADP + H(+). Its function is as follows. Catalyzes the ATP-dependent phosphorylation of fructose-l-phosphate to fructose-l,6-bisphosphate. The protein is 1-phosphofructokinase (fruK) of Haemophilus influenzae (strain ATCC 51907 / DSM 11121 / KW20 / Rd).